A 271-amino-acid polypeptide reads, in one-letter code: 4-hydroxy-tetrahydrodipicolinate reductase (271 aa).

Residues 11-16 (GGSGRM) and Glu37 each bind NAD(+). Arg38 lines the NADP(+) pocket. Residues 101–103 (GTT) and 125–128 (APNM) each bind NAD(+). Catalysis depends on His158, which acts as the Proton donor/acceptor. (S)-2,3,4,5-tetrahydrodipicolinate is bound at residue His159. Lys162 serves as the catalytic Proton donor. 168-169 (GT) contributes to the (S)-2,3,4,5-tetrahydrodipicolinate binding site.

Belongs to the DapB family.

It is found in the cytoplasm. The catalysed reaction is (S)-2,3,4,5-tetrahydrodipicolinate + NAD(+) + H2O = (2S,4S)-4-hydroxy-2,3,4,5-tetrahydrodipicolinate + NADH + H(+). The enzyme catalyses (S)-2,3,4,5-tetrahydrodipicolinate + NADP(+) + H2O = (2S,4S)-4-hydroxy-2,3,4,5-tetrahydrodipicolinate + NADPH + H(+). It participates in amino-acid biosynthesis; L-lysine biosynthesis via DAP pathway; (S)-tetrahydrodipicolinate from L-aspartate: step 4/4. Catalyzes the conversion of 4-hydroxy-tetrahydrodipicolinate (HTPA) to tetrahydrodipicolinate. The protein is 4-hydroxy-tetrahydrodipicolinate reductase of Shewanella piezotolerans (strain WP3 / JCM 13877).